The following is a 102-amino-acid chain: Small ribosomal subunit protein uS10 (102 aa).

This sequence belongs to the universal ribosomal protein uS10 family. In terms of assembly, part of the 30S ribosomal subunit.

In terms of biological role, involved in the binding of tRNA to the ribosomes. This Methanoregula boonei (strain DSM 21154 / JCM 14090 / 6A8) protein is Small ribosomal subunit protein uS10.